A 235-amino-acid chain; its full sequence is tRNA1(Val) (adenine(37)-N6)-methyltransferase (235 aa).

It belongs to the methyltransferase superfamily. tRNA (adenine-N(6)-)-methyltransferase family.

The protein localises to the cytoplasm. The catalysed reaction is adenosine(37) in tRNA1(Val) + S-adenosyl-L-methionine = N(6)-methyladenosine(37) in tRNA1(Val) + S-adenosyl-L-homocysteine + H(+). Functionally, specifically methylates the adenine in position 37 of tRNA(1)(Val) (anticodon cmo5UAC). The polypeptide is tRNA1(Val) (adenine(37)-N6)-methyltransferase (Glaesserella parasuis serovar 5 (strain SH0165) (Haemophilus parasuis)).